A 155-amino-acid polypeptide reads, in one-letter code: Cytochrome c-type biogenesis protein CcmE (155 aa).

Over 1–8 (MNPRRKKR) the chain is Cytoplasmic. Residues 9 to 29 (LLITSLLAVALSLAVGLVLFA) traverse the membrane as a helical; Signal-anchor for type II membrane protein segment. Topologically, residues 30 to 155 (LQQNIDLFYT…GMDNFKANNK (126 aa)) are periplasmic. Heme is bound by residues His131 and Tyr135.

It belongs to the CcmE/CycJ family.

It is found in the cell inner membrane. Its function is as follows. Heme chaperone required for the biogenesis of c-type cytochromes. Transiently binds heme delivered by CcmC and transfers the heme to apo-cytochromes in a process facilitated by CcmF and CcmH. The protein is Cytochrome c-type biogenesis protein CcmE of Psychromonas ingrahamii (strain DSM 17664 / CCUG 51855 / 37).